The sequence spans 396 residues: MYIKVLSVTDINNYIKNTMDNDFILNNASIRGEISNFKIHSSGHVYFSMKDQWSKINCVMFRSAAKGLKFLPEDGMKIIANGRISAYVKDGSYQLYCDKLELEGLGELYIAFEKLKNKLEKEGLFKEECKKSLPQYAKKIGVITSETGAAIRDIINVATRRNKNCEILIYPSLVQGTNASSDIIKGIKELNKVKDLDVIILARGGGSIEELWVFNDEELAREIFKSKVPIITGVGHETDFTIADFVSDKRAPTPSAAAEIAIKDLQELNSRLENYKNALNYYVLNNLKEKYNKLDRLKLSMEGNSPERIIINEYNKIDFIINKLNSYIKIEVDKRKEELSRMSILLSSNNPLNILNKGYSVIQDGTGKVINTIKELDKEKKVTINLKDGKKEYQIQ.

This sequence belongs to the XseA family. Heterooligomer composed of large and small subunits.

Its subcellular location is the cytoplasm. It catalyses the reaction Exonucleolytic cleavage in either 5'- to 3'- or 3'- to 5'-direction to yield nucleoside 5'-phosphates.. Functionally, bidirectionally degrades single-stranded DNA into large acid-insoluble oligonucleotides, which are then degraded further into small acid-soluble oligonucleotides. This Clostridium tetani (strain Massachusetts / E88) protein is Exodeoxyribonuclease 7 large subunit.